The following is a 286-amino-acid chain: Diaminopimelate epimerase (286 aa).

Substrate-binding residues include asparagine 13 and asparagine 66. Residue cysteine 75 is the Proton donor of the active site. Substrate contacts are provided by residues 76–77 (GN), asparagine 165, asparagine 198, and 216–217 (ER). The active-site Proton acceptor is cysteine 225. A substrate-binding site is contributed by 226–227 (GT).

The protein belongs to the diaminopimelate epimerase family. Homodimer.

It is found in the cytoplasm. The enzyme catalyses (2S,6S)-2,6-diaminopimelate = meso-2,6-diaminopimelate. It participates in amino-acid biosynthesis; L-lysine biosynthesis via DAP pathway; DL-2,6-diaminopimelate from LL-2,6-diaminopimelate: step 1/1. In terms of biological role, catalyzes the stereoinversion of LL-2,6-diaminopimelate (L,L-DAP) to meso-diaminopimelate (meso-DAP), a precursor of L-lysine and an essential component of the bacterial peptidoglycan. The chain is Diaminopimelate epimerase from Thermosynechococcus vestitus (strain NIES-2133 / IAM M-273 / BP-1).